Reading from the N-terminus, the 298-residue chain is Nucleotide-binding protein RSKD131_3085 (298 aa).

ATP is bound at residue 11–18 (GPSGAGRT). 58–61 (DVRN) is a binding site for GTP.

It belongs to the RapZ-like family.

Displays ATPase and GTPase activities. The sequence is that of Nucleotide-binding protein RSKD131_3085 from Cereibacter sphaeroides (strain KD131 / KCTC 12085) (Rhodobacter sphaeroides).